The primary structure comprises 297 residues: Protease HtpX homolog (297 aa).

A run of 2 helical transmembrane segments spans residues 14–34 (VILL…AGYL) and 39–59 (YQLG…SMIF). Residue His-143 participates in Zn(2+) binding. Glu-144 is an active-site residue. His-147 is a binding site for Zn(2+). Transmembrane regions (helical) follow at residues 158–178 (IAVA…RMMW) and 193–213 (GFGA…PLAA). Glu-225 lines the Zn(2+) pocket.

The protein belongs to the peptidase M48B family. It depends on Zn(2+) as a cofactor.

Its subcellular location is the cell membrane. The sequence is that of Protease HtpX homolog from Streptococcus equi subsp. equi (strain 4047).